The primary structure comprises 113 residues: uncharacterized protein (113 aa).

The SWIM-type zinc finger occupies 49-91 (FFVVVGKEEYVVEGGFCTCPDFLVNLKGKSPCAHIIAVEVAKI).

This is an uncharacterized protein from Archaeoglobus fulgidus (strain ATCC 49558 / DSM 4304 / JCM 9628 / NBRC 100126 / VC-16).